Reading from the N-terminus, the 264-residue chain is ATP synthase subunit a (264 aa).

5 consecutive transmembrane segments (helical) span residues 39-59 (LDTLIISVVLGALFILIFYII), 97-117 (VAPLALTIFIWVFLMNFMDLV), 139-159 (TADPTLTFAMSITVFVLVVFY), 205-225 (LFGNLFAGELIFILIALLPWW), and 239-259 (LLVITVQAFIFMMLTVVYISL).

This sequence belongs to the ATPase A chain family. F-type ATPases have 2 components, CF(1) - the catalytic core - and CF(0) - the membrane proton channel. CF(1) has five subunits: alpha(3), beta(3), gamma(1), delta(1), epsilon(1). CF(0) has three main subunits: a(1), b(2) and c(9-12). The alpha and beta chains form an alternating ring which encloses part of the gamma chain. CF(1) is attached to CF(0) by a central stalk formed by the gamma and epsilon chains, while a peripheral stalk is formed by the delta and b chains.

Its subcellular location is the cell inner membrane. In terms of biological role, key component of the proton channel; it plays a direct role in the translocation of protons across the membrane. The chain is ATP synthase subunit a from Coxiella burnetii (strain CbuG_Q212) (Coxiella burnetii (strain Q212)).